The primary structure comprises 456 residues: Riboflavin transporter RibZ (456 aa).

14 consecutive transmembrane segments (helical) span residues 5–25 (WIVL…GSIL), 45–65 (WVVT…GKLG), 78–98 (FFIF…STLI), 105–125 (AVGA…AFPA), 134–154 (ITGA…GIIL), 158–178 (GWPS…FLGI), 192–212 (SFDI…LLAM), 220–240 (LYLG…EVKF), 260–280 (IIGV…PFYL), 289–309 (MMAG…APIA), 321–341 (ILTA…LLKA), 343–363 (SPLY…GAFS), 385–405 (FLAT…SSFF), and 428–448 (QSYW…VFFM).

This sequence belongs to the major facilitator superfamily.

Its subcellular location is the cell membrane. In terms of biological role, transports riboflavin into the cell. The chain is Riboflavin transporter RibZ from Clostridioides difficile (strain 630) (Peptoclostridium difficile).